The sequence spans 166 residues: Large ribosomal subunit protein eL21 (166 aa).

It belongs to the eukaryotic ribosomal protein eL21 family. Component of the large ribosomal subunit.

It localises to the cytoplasm. The protein resides in the cytosol. It is found in the endoplasmic reticulum. Functionally, component of the large ribosomal subunit. The ribosome is a large ribonucleoprotein complex responsible for the synthesis of proteins in the cell. This Entamoeba histolytica (strain ATCC 30459 / HM-1:IMSS / ABRM) protein is Large ribosomal subunit protein eL21 (RPL21).